Consider the following 756-residue polypeptide: Rab11 family-interacting protein 3 (756 aa).

Over residues 1-24 (MASAPPASPPGSEPPGPDPEPGGP) the composition is skewed to pro residues. The segment at 1 to 204 (MASAPPASPP…SEPVGSQEDG (204 aa)) is disordered. The tract at residues 2 to 435 (ASAPPASPPG…RLSSKKVARY (434 aa)) is important for binding to DYNC1LI1. Low complexity predominate over residues 27–39 (PGAAQLAPGPAEL). Position 52 is a phosphoserine (S52). Residues 53-68 (PGLDEPAPGAAADGGA) are compositionally biased toward low complexity. Over residues 84 to 94 (DPGPSAPPPRS) the composition is skewed to pro residues. At S102 the chain carries Phosphoserine; by CDK1. EF-hand domains lie at 202–237 (EDGP…YGAE) and 234–269 (YGAE…IRNG). D215, D217, D219, D226, D247, S249, and D258 together coordinate Ca(2+). Phosphoserine is present on residues S281, S348, S488, S538, S647, and S648. The segment at 484–588 (GEQHSRLRQE…LLDEIESLTL (105 aa)) is ARF-binding domain (ABD). A coiled-coil region spans residues 485 to 694 (EQHSRLRQEN…NGQIITLSIQ (210 aa)). The segment at 645–664 (RSSSMGLQEYHSRARESELE) is disordered. Basic and acidic residues predominate over residues 654–664 (YHSRARESELE). In terms of domain architecture, FIP-RBD spans 694–756 (QGAKSLFSTA…ETNPSILEVK (63 aa)).

In terms of assembly, homodimer. Interacts with RAB11A; the interaction is direct and is required for the recruitment to endosomes. Interacts with RAB11B. Forms a ternary complex with RAB11A and dynein intermediate chain DYNC1LI1; RAB11FIP3 links RAB11A to dynein and the interaction regulates endocytic trafficking. Interacts with dynein intermediate chain and dynactin (DCTN1); the interaction activates dynein processivity. Interacts with ARF6 and EXOC7; the interaction serves for recruitment and tethering of recycling endosomes-derived vesicles to the cleavage furrow/midbody. Interacts with RACGAP1/MgcRacGAP; the interaction occurs at late telophase and is required for recruitment and tethering of recycling endosomes-derived vesicles to the cleavage furrow/midbody. Forms a complex with RAB11A and Rabin8/RAB3IP, probably a heterohexamer with two of each protein subunit, where RAB3IP and RAB11FIP3 simultaneously bind to RAB11A; the complex promotes preciliary trafficking. Forms a complex containing RAB11A, ASAP1, RAB3IP, RAP11FIP3 and ARF4; the complex promotes preciliary trafficking; the complex binds to RHO in photoreceptor cells and promotes RHO ciliary transport. Interacts with RAB11FIP4. Interacts with RAB25. In terms of processing, phosphorylated at Ser-102 by CDK1 during metaphase, and dephosphorylated as cells enter telophase.

The protein localises to the endosome membrane. The protein resides in the recycling endosome membrane. It localises to the cytoplasm. It is found in the cytoskeleton. Its subcellular location is the microtubule organizing center. The protein localises to the centrosome. The protein resides in the cleavage furrow. It localises to the midbody. It is found in the golgi apparatus membrane. Its subcellular location is the golgi apparatus. The protein localises to the trans-Golgi network membrane. Downstream effector molecule for Rab11 GTPase which is involved in endocytic trafficking, cytokinesis and intracellular ciliogenesis by participating in membrane delivery. Recruited by Rab11 to endosomes where it links Rab11 to dynein motor complex. The functional Rab11-RAB11FIP3-dynein complex regulates the movement of peripheral sorting endosomes (SE) along microtubule tracks toward the microtubule organizing center/centrosome, generating the endocytic recycling compartment (ERC) during interphase of cell cycle. Facilitates the interaction between dynein and dynactin and activates dynein processivity. Binding with ASAP1 is needed to regulate the pericentrosomal localization of recycling endosomes. The Rab11-RAB11FIP3 complex is also implicated in the transport during telophase of vesicles derived from recycling endosomes to the cleavage furrow via centrosome-anchored microtubules, where the vesicles function to deliver membrane during late cytokinesis and abscission. The recruitment of Rab11-RAB11FIP3-containing endosomes to the cleavage furrow and tethering to the midbody is co-mediated by RAB11FIP3 interaction with ARF6-exocyst and RACGAP1-MKLP1 tethering complexes. Also involved in the Rab11-Rabin8-Rab8 ciliogenesis cascade by facilitating the orderly assembly of a ciliary targeting complex containing Rab11, ASAP1, Rabin8/RAB3IP, RAB11FIP3 and ARF4, which directs preciliary vesicle trafficking to mother centriole and ciliogenesis initiation. Also promotes the activity of Rab11 and ASAP1 in the ARF4-dependent Golgi-to-cilia transport of the sensory receptor rhodopsin. Competes with WDR44 for binding to Rab11, which controls intracellular ciliogenesis pathway. May play a role in breast cancer cell motility by regulating actin cytoskeleton. The chain is Rab11 family-interacting protein 3 from Homo sapiens (Human).